A 52-amino-acid chain; its full sequence is Light-harvesting protein B-880 alpha chain (52 aa).

Over M1–R12 the chain is Cytoplasmic. The chain crosses the membrane as a helical span at residues T13–L33. Residue H29 coordinates a bacteriochlorophyll. Residues S34 to S52 are Periplasmic-facing.

It belongs to the antenna complex alpha subunit family. The core complex is formed by different alpha and beta chains, binding bacteriochlorophyll molecules, and arranged most probably in tetrameric structures disposed around the reaction center. The non-pigmented gamma chains may constitute additional components.

It is found in the cell inner membrane. Functionally, antenna complexes are light-harvesting systems, which transfer the excitation energy to the reaction centers. This is Light-harvesting protein B-880 alpha chain from Afifella marina (Rhodobium marinum).